A 360-amino-acid polypeptide reads, in one-letter code: MKILNLDLGYKSYPIYIGQNLLLKGELLTKHISGKQVMIVTNTTVAPLYLKKVQNLLLSFEFAQVILPDGEKYKTLDTVNCIFSALLEKRFDRSCTLIALGGGVVGDMTGFVAASYQRGVNFIQIPTTLLSQVDSSVGGKTGVNHMLGKNMIGAFHQPKCVLIDIYTLDTLDSQQYSSGMAEVIKYGLLVEYLNFFNFLQENIKDLMDRKQSLIIEMIYQSCQHKINIVAQDELEMGKRTLLNLGHTFGHAIENTLGYGTFLHGEAISVGILMATRLSQLEGYLSSKQVAKIQDLLEKANLPISIIGKINASAFMKAMLVDKKVINGNIRLILLKRLGQAFICDNYNNHLLDQVVNEFCQ.

Residues 69-74 (DGEKYK), 103-107 (GVVGD), 127-128 (TT), lysine 140, lysine 149, and 167-170 (TLDT) each bind NAD(+). Residues glutamate 182, histidine 246, and histidine 263 each coordinate Zn(2+).

This sequence belongs to the sugar phosphate cyclases superfamily. Dehydroquinate synthase family. The cofactor is Co(2+). Zn(2+) is required as a cofactor. NAD(+) serves as cofactor.

The protein localises to the cytoplasm. The enzyme catalyses 7-phospho-2-dehydro-3-deoxy-D-arabino-heptonate = 3-dehydroquinate + phosphate. The protein operates within metabolic intermediate biosynthesis; chorismate biosynthesis; chorismate from D-erythrose 4-phosphate and phosphoenolpyruvate: step 2/7. In terms of biological role, catalyzes the conversion of 3-deoxy-D-arabino-heptulosonate 7-phosphate (DAHP) to dehydroquinate (DHQ). The polypeptide is 3-dehydroquinate synthase (Vesicomyosocius okutanii subsp. Calyptogena okutanii (strain HA)).